The primary structure comprises 190 residues: RNA-binding protein OPG065 (190 aa).

The Z-binding domain maps to 5–70 (YIDERSDAEI…DIPPRWFMTT (66 aa)). Residues 117 to 184 (NPVTIINEYC…AKLAVDKLLG (68 aa)) enclose the DRBM domain.

This sequence belongs to the orthopoxvirus OPG065 family. As to quaternary structure, interacts with host G1P2/ISG15. Interacts with host EIF2AK2/PKR. Interacts with host ZBP1.

Its function is as follows. RNA-binding protein that plays a role in the inhibition of multiple cellular antiviral responses activated by double-stranded RNA (dsRNA), such as inhibition of PKR activation, necroptosis, and IFN-mediated antiviral activities. Recognizes and binds Z-RNA structures via its Z-binding domain and dsRNA via its DRBM domain: RNA-binding activity is required to escape host ZBP1-dependent necroptosis. Mechanistically, the Z-binding domain binds Z-RNAs that are produced during vaccinia virus infection, thereby competing with Z-RNA detection by host ZBP1, suppressing ZBP1-dependent necroptosis. Acts as a key inhibitor of the interferon response by blocking the phosphorylation and subsequent activation of IRF3 and IRF7 kinases that are required for interferon-alpha gene expression. Inhibits NF-kappa-B activation and the ubiquitin-like protein ISG15, which is an early antiviral protein. The binding with host ISG15 subsequently blocks host ISGylation. The protein is RNA-binding protein OPG065 (OPG065) of Homo sapiens (Human).